Reading from the N-terminus, the 245-residue chain is tRNA pseudouridine synthase A (245 aa).

The active-site Nucleophile is the Asp-52. Substrate is bound at residue Tyr-111.

It belongs to the tRNA pseudouridine synthase TruA family. In terms of assembly, homodimer.

The catalysed reaction is uridine(38/39/40) in tRNA = pseudouridine(38/39/40) in tRNA. In terms of biological role, formation of pseudouridine at positions 38, 39 and 40 in the anticodon stem and loop of transfer RNAs. The sequence is that of tRNA pseudouridine synthase A from Rhodopseudomonas palustris (strain BisB18).